We begin with the raw amino-acid sequence, 114 residues long: Large ribosomal subunit protein uL22 (114 aa).

It belongs to the universal ribosomal protein uL22 family. As to quaternary structure, part of the 50S ribosomal subunit.

Functionally, this protein binds specifically to 23S rRNA; its binding is stimulated by other ribosomal proteins, e.g. L4, L17, and L20. It is important during the early stages of 50S assembly. It makes multiple contacts with different domains of the 23S rRNA in the assembled 50S subunit and ribosome. The globular domain of the protein is located near the polypeptide exit tunnel on the outside of the subunit, while an extended beta-hairpin is found that lines the wall of the exit tunnel in the center of the 70S ribosome. The chain is Large ribosomal subunit protein uL22 from Lysinibacillus sphaericus (strain C3-41).